Here is a 402-residue protein sequence, read N- to C-terminus: Nodulation protein E (402 aa).

Residues 2–401 (DRRVVITGIG…GMNAVLAFRQ (400 aa)) form the Ketosynthase family 3 (KS3) domain. Active-site for beta-ketoacyl synthase activity residues include C162, H294, and H331. The helical transmembrane segment at 329-348 (HAHCLGAASALEMIACVMAI) threads the bilayer.

This sequence belongs to the thiolase-like superfamily. Beta-ketoacyl-ACP synthases family.

The protein localises to the cell inner membrane. Proposed to synthesize NOD factor fatty acyl chain. Involved in the synthesis of a highly unsaturated fatty acid moiety, which forms part of a lipo-oligosaccharide that is responsible for host specificity. The polypeptide is Nodulation protein E (nodE) (Rhizobium sp. (strain N33)).